The sequence spans 477 residues: Zinc metalloproteinase/disintegrin (477 aa).

An N-terminal signal peptide occupies residues 1–20 (MIEVLLVTICLAAFPYQGSS). The propeptide occupies 21–187 (IILESGNVND…PIKKASQSNL (167 aa)). In terms of domain architecture, Peptidase M12B spans 193 to 389 (RYIELFLVVD…DNPQCILNKQ (197 aa)). 2 residues coordinate Ca(2+): E196 and D280. 3 disulfides stabilise this stretch: C304–C384, C344–C368, and C346–C351. H329 is a Zn(2+) binding site. E330 is a catalytic residue. Zn(2+)-binding residues include H333 and H339. Positions 384 and 387 each coordinate Ca(2+). A propeptide spanning residues 390–404 (LRTDTVSTPVSGKNF) is cleaved from the precursor. Positions 396–477 (STPVSGKNFG…AGCPRNPFHA (82 aa)) constitute a Disintegrin domain. 6 disulfides stabilise this stretch: C410/C425, C412/C420, C419/C442, C433/C439, C438/C463, and C451/C470. The Cell attachment site motif lies at 455-457 (RGD).

It belongs to the venom metalloproteinase (M12B) family. P-II subfamily. P-IIa sub-subfamily. Monomer. Zn(2+) is required as a cofactor. As to expression, expressed by the venom gland.

Its subcellular location is the secreted. Inhibited by 1,10-phenanthroline and EDTA. Its function is as follows. Impairs hemostasis in the envenomed animal. Does not exhibit detectable plasminogen activating activity. Has hemagglutinating activity on red blood cells. Cleaves insulin B chain at '38-Ala-|-Leu-39' and '40-Tyr-|-Leu-41' bonds. This recombinant protein shows high inhibitory activity on collagen-induced platelet aggregation. This Bothrops jararaca (Jararaca) protein is Zinc metalloproteinase/disintegrin.